The following is a 734-amino-acid chain: Myb-like protein J (734 aa).

Disordered stretches follow at residues 1–35 (MPNNQQNQIESPSKNTSNVGGSTLLNNNSPPFKSN), 128–196 (QKDQ…PTMM), and 221–378 (SPIS…LKQG). Residues 131 to 142 (QQQKEQQKEQQK) show a composition bias toward basic and acidic residues. Residues 164-173 (TTTTTTTTTT) show a composition bias toward low complexity. The segment covering 174 to 196 (AVEQQGAEQQDTNLNSTSSPTMM) has biased composition (polar residues). The span at 221–230 (SPISSSLNNS) shows a compositional bias: low complexity. Residues 231–257 (QDNTKPVSPDNIENTSNPMDTSSSNGK) show a composition bias toward polar residues. Over residues 258-372 (TPTITPIVTP…GGKTNPTGKK (115 aa)) the composition is skewed to low complexity. In terms of domain architecture, HTH myb-type spans 371-426 (KKTSLKQGWTKEEHIRFLNGIQIHGKGAWKEIAQFVGTRTPTQIQSHAQKYYLRQK). The H-T-H motif DNA-binding region spans 399 to 422 (WKEIAQFVGTRTPTQIQSHAQKYY). The segment covering 445 to 454 (DDNLNNSNKN) has biased composition (low complexity). The interval 445–623 (DDNLNNSNKN…GNILRHQNSH (179 aa)) is disordered. Basic and acidic residues predominate over residues 455–468 (NVDKNKQDDKEKKT). The segment covering 469–478 (QKTKKTKSKS) has biased composition (basic residues). Composition is skewed to low complexity over residues 489–543 (QQQQ…SSQT) and 574–615 (NNNN…NEGN).

It is found in the nucleus. In Dictyostelium discoideum (Social amoeba), this protein is Myb-like protein J (mybJ).